The primary structure comprises 427 residues: 3-phosphoshikimate 1-carboxyvinyltransferase (427 aa).

3 residues coordinate 3-phosphoshikimate: Lys-27, Ser-28, and Arg-32. Residue Lys-27 participates in phosphoenolpyruvate binding. Phosphoenolpyruvate is bound by residues Gly-95 and Arg-123. Positions 166, 167, 168, 192, 305, and 332 each coordinate 3-phosphoshikimate. Residue Gln-168 participates in phosphoenolpyruvate binding. Residue Asp-305 is the Proton acceptor of the active site. Residues Arg-336 and Arg-377 each coordinate phosphoenolpyruvate.

The protein belongs to the EPSP synthase family. As to quaternary structure, monomer.

It localises to the cytoplasm. The enzyme catalyses 3-phosphoshikimate + phosphoenolpyruvate = 5-O-(1-carboxyvinyl)-3-phosphoshikimate + phosphate. It participates in metabolic intermediate biosynthesis; chorismate biosynthesis. Its function is as follows. Catalyzes the transfer of the enolpyruvyl moiety of phosphoenolpyruvate (PEP) to the 5-hydroxyl of shikimate-3-phosphate (S3P) to produce enolpyruvyl shikimate-3-phosphate and inorganic phosphate. This is 3-phosphoshikimate 1-carboxyvinyltransferase from Aeropyrum pernix (strain ATCC 700893 / DSM 11879 / JCM 9820 / NBRC 100138 / K1).